A 1638-amino-acid chain; its full sequence is ATP-dependent helicase brm (1638 aa).

2 disordered regions span residues 1 to 137 and 201 to 387; these read MASP…SQEN and QMQQ…GMPM. The segment covering 7-51 has biased composition (pro residues); that stretch reads ANSPMPPPQAPSPMAPPSQSPAPSPHSPYPHQQPGPLQGPPPPGH. The segment covering 52 to 63 has biased composition (low complexity); that stretch reads PGAYGHPMQHGP. Residues 121–131 are compositionally biased toward pro residues; the sequence is GGPPGGPPPPE. Residues 173–208 enclose the QLQ domain; sequence HLNGNQVNLLRTQITAYRLLARNKPISMQMQQALQA. The segment covering 201-211 has biased composition (low complexity); it reads QMQQALQAAQQ. Composition is skewed to pro residues over residues 212 to 231, 238 to 253, 263 to 272, and 279 to 304; these read QPPP…PPPG, PPVP…PSAG, ASNPYGPPVP, and APPP…PPPI. Low complexity-rich tracts occupy residues 305 to 317 and 365 to 382; these read QQQQ…QQQS and PGSQ…QVPP. The HSA domain occupies 501–573; that stretch reads QKLEAERKRR…EKERMRRLMA (73 aa). The segment at 691–730 is disordered; sequence DEEDSCGSNDDHKPKVEEQPTATEDATDKAQATGNDEDAK. Serine 695 and serine 698 each carry phosphoserine. Positions 699 to 708 are enriched in basic and acidic residues; that stretch reads NDDHKPKVEE. The segment covering 710–724 has biased composition (polar residues); the sequence is PTATEDATDKAQATG. Residues 785–950 form the Helicase ATP-binding domain; that stretch reads VSLYNNNLNG…WALLNFLLPS (166 aa). Position 798–805 (798–805) interacts with ATP; sequence DEMGLGKT. The short motif at 900 to 903 is the DEGH box element; the sequence is DEGH. Residues 1102-1263 form the Helicase C-terminal domain; the sequence is LLDRILPKLK…QKSTGSERQQ (162 aa). The segment covering 1380-1391 has biased composition (acidic residues); that stretch reads DGAEFDEEEEED. The disordered stretch occupies residues 1380-1412; that stretch reads DGAEFDEEEEEDDSKRKRRKRKNRKEESDDDSL. A phosphoserine mark is found at serine 1407 and serine 1411. A Bromo domain is found at 1425–1530; the sequence is RSKKQMHKIM…KVFVGARQRI (106 aa). A disordered region spans residues 1544–1578; sequence NTGEAHGNGGSDNSDNDDDDGGDDGSDDEEIATTS. The span at 1557 to 1574 shows a compositional bias: acidic residues; that stretch reads SDNDDDDGGDDGSDDEEI. Phosphoserine occurs at positions 1591 and 1594. Over residues 1592–1604 the composition is skewed to low complexity; the sequence is LASAPATPTQSSS. Positions 1592–1638 are disordered; that stretch reads LASAPATPTQSSSNVSSGAATTSKKQTRRKRSQKKYTISDDDDDDMD. Positions 1616–1625 are enriched in basic residues; sequence KQTRRKRSQK.

In terms of assembly, component of the Brahma complex, which is composed of brm, osa, mor, Snr1/Bap45, dalao/Bap111, Bap55, Bap60 and Act42A/Bap47. Interacts with asf1. Associates with the brm-HDAC3-erm repressor complex, composed of brm, HDAC3 and erm. Interacts with erm and HDAC3.

The protein localises to the nucleus. The catalysed reaction is ATP + H2O = ADP + phosphate + H(+). Transcriptional regulator. Acts as a coactivator, assisting one or more dedicated transcriptional activators of ANTC and BXC homeotic gene clusters. Can counteract the repressive effect of Polycomb protein. ATPase subunit of the Brahma complex, a multiprotein complex which is the equivalent of the yeast SWI/SNF complex and acts by remodeling the chromatin by catalyzing an ATP-dependent alteration in the structure of nucleosomal DNA. This complex can both serve as a transcriptional coactivator or corepressor, depending on the context. In type II neuroblast lineage, as part of the Brm remodeling complex, suppresses the formation of ectopic neuroblasts probably through interaction with erm and HDAC3. This chain is ATP-dependent helicase brm (brm), found in Drosophila melanogaster (Fruit fly).